The sequence spans 579 residues: Transcription factor COE2 (579 aa).

Residues 63–66 (RKSN) form an interaction with DNA region. Residues 149–168 (CRVLLTHEVMCSRCCEKKSC) form a C5-type zinc finger. Interaction with DNA regions lie at residues 195-202 (NCLKTAGN) and 234-237 (NNSK). In terms of domain architecture, IPT/TIG spans 260–343 (PCIKAISPSE…KGAPGRFIYT (84 aa)). Disordered regions lie at residues 442–482 (GVSI…YGSN), 514–533 (AIMPSSPPGSSSSSSLLPFS), and 549–579 (LRPQGFPHHPSAKTSGGTSFRAMTGLVVPPM). Residues 449 to 459 (GQTSGQGYTRN) are compositionally biased toward polar residues. 2 stretches are compositionally biased toward low complexity: residues 460 to 472 (SSSLSPRGYPSSS) and 521 to 533 (PGSSSSSSLLPFS).

This sequence belongs to the COE family.

Its subcellular location is the nucleus. This Danio rerio (Zebrafish) protein is Transcription factor COE2 (coe2).